Here is a 427-residue protein sequence, read N- to C-terminus: G2/mitotic-specific cyclin-3 (427 aa).

The segment covering 1–12 (MHHNSQSLSSGH) has biased composition (polar residues). Disordered stretches follow at residues 1-29 (MHHN…NLKH) and 89-126 (SVAQ…EDQE). The segment covering 89–105 (SVAQRKEADHNDLLTDR) has biased composition (basic and acidic residues). Positions 106 to 126 (EQEEPVEDDGESEEDEEEDQE) are enriched in acidic residues.

The protein belongs to the cyclin family. Cyclin AB subfamily.

Essential for the control of the cell cycle at the G2/M (mitosis) transition. Interacts with the CDC2 protein kinase to form MPF. G2/M cyclins accumulate steadily during G2 and are abruptly destroyed at mitosis. This Saccharomyces cerevisiae (strain ATCC 204508 / S288c) (Baker's yeast) protein is G2/mitotic-specific cyclin-3 (CLB3).